The sequence spans 306 residues: MREAAGLEARGLKSPPILKGQDGEGSLQVHQSDDMKIEGAKVFAVYGKGGIGKSTTSSNLSAAFSKLGKKVLQIGCDPKHDSTFTLTGMLQPTVIDILKSVDFHAEELRPEDFVTQGYNGVQCIEAGGPPAGTGCGGYVVGQTVKLLKQHHLLEDTDVVLFDVLGDVVCGGFAAPLQHADRALIVTANDFDSIYAMNRIIAAVQAKSKNYNVRLAGCVANRSKDTDEVDRYCDVVGFKRIGHMPDVDAIRRSRLKKKTLFEMPDEEDIVQCRAEYIRLAEKLYAGTDPLAPAPLEDRDIFELLGFD.

Residues 1–31 (MREAAGLEARGLKSPPILKGQDGEGSLQVHQ) form a disordered region. Residues 50-55 (GIGKST) and Lys79 each bind ATP. Residue Ser54 participates in Mg(2+) binding. Residues Cys135 and Cys169 each coordinate [4Fe-4S] cluster. 220–221 (NR) lines the ATP pocket.

It belongs to the NifH/BchL/ChlL family. In terms of assembly, homodimer. Protochlorophyllide reductase is composed of three subunits; BchL, BchN and BchB. The cofactor is [4Fe-4S] cluster.

It catalyses the reaction chlorophyllide a + oxidized 2[4Fe-4S]-[ferredoxin] + 2 ADP + 2 phosphate = protochlorophyllide a + reduced 2[4Fe-4S]-[ferredoxin] + 2 ATP + 2 H2O. The protein operates within porphyrin-containing compound metabolism; bacteriochlorophyll biosynthesis (light-independent). In terms of biological role, component of the dark-operative protochlorophyllide reductase (DPOR) that uses Mg-ATP and reduced ferredoxin to reduce ring D of protochlorophyllide (Pchlide) to form chlorophyllide a (Chlide). This reaction is light-independent. The L component serves as a unique electron donor to the NB-component of the complex, and binds Mg-ATP. This Jannaschia sp. (strain CCS1) protein is Light-independent protochlorophyllide reductase iron-sulfur ATP-binding protein.